We begin with the raw amino-acid sequence, 95 residues long: Mammaglobin-B (95 aa).

Residues 1–18 (MKLLMVLMLAALLLHCYA) form the signal peptide. An N-linked (GlcNAc...) asparagine glycan is attached at N68.

Heterodimer of a lipophilin A and a lipophilin C (mammaglobin B) monomer associated head to head. Expressed in thymus, trachea, kidney, steroid responsive tissues (prostate, testis, uterus, breast and ovary) and salivary gland.

Its subcellular location is the secreted. Functionally, may bind androgens and other steroids, may also bind estramustine, a chemotherapeutic agent used for prostate cancer. May be under transcriptional regulation of steroid hormones. The chain is Mammaglobin-B (SCGB2A1) from Homo sapiens (Human).